Reading from the N-terminus, the 1318-residue chain is DNA-directed RNA polymerase subunit beta' (1318 aa).

4 residues coordinate Zn(2+): cysteine 221, cysteine 295, cysteine 302, and cysteine 305.

Belongs to the RNA polymerase beta' chain family. RpoC2 subfamily. As to quaternary structure, in cyanobacteria the RNAP catalytic core is composed of 2 alpha, 1 beta, 1 beta', 1 gamma and 1 omega subunit. When a sigma factor is associated with the core the holoenzyme is formed, which can initiate transcription. Requires Zn(2+) as cofactor.

The catalysed reaction is RNA(n) + a ribonucleoside 5'-triphosphate = RNA(n+1) + diphosphate. Functionally, DNA-dependent RNA polymerase catalyzes the transcription of DNA into RNA using the four ribonucleoside triphosphates as substrates. In Synechococcus elongatus (strain ATCC 33912 / PCC 7942 / FACHB-805) (Anacystis nidulans R2), this protein is DNA-directed RNA polymerase subunit beta'.